Consider the following 623-residue polypeptide: Glutathione import ATP-binding protein GsiA (623 aa).

2 ABC transporter domains span residues 15–269 (VENL…RALL) and 314–564 (LRVR…RKLL). Residues 49–56 (GESGSGKS) and 357–364 (GESGSGKS) each bind ATP.

It belongs to the ABC transporter superfamily. Glutathione importer (TC 3.A.1.5.11) family. The complex is composed of two ATP-binding proteins (GsiA), two transmembrane proteins (GsiC and GsiD) and a solute-binding protein (GsiB).

The protein localises to the cell inner membrane. It carries out the reaction glutathione(out) + ATP + H2O = glutathione(in) + ADP + phosphate + H(+). Functionally, part of the ABC transporter complex GsiABCD involved in glutathione import. Responsible for energy coupling to the transport system. This Shigella flexneri protein is Glutathione import ATP-binding protein GsiA.